The primary structure comprises 234 residues: MNKKLLMNFFIVSPLLLATTATDFTPVPLSSNQIIKTAKASTNDNIKDLLDWYSSGSDTFTNSEVLDNSLGSMRIKNTDGSISLIIFPSPYYSPAFTKGEKVDLNTKRTKKSQHTSEGTYIHFQISGVTNTEKLPTPIELPLKVKVHGKDSPLKYGPKFDKKQLAISTLDFEIRHQLTQIHGLYRSSDKTGGYWKITMNDGSTYQSDLSKKFEYNTEKPPINIDEIKTIEAEIN.

Residues 1-40 form the signal peptide; sequence MNKKLLMNFFIVSPLLLATTATDFTPVPLSSNQIIKTAKA.

This sequence belongs to the staphylococcal/streptococcal toxin family.

The protein localises to the secreted. Functionally, responsible for the symptoms of toxic shock syndrome. This is Toxic shock syndrome toxin-1 (tst) from Staphylococcus aureus.